Reading from the N-terminus, the 428-residue chain is Zinc metalloproteinase nas-27 (428 aa).

An N-terminal signal peptide occupies residues 1–17 (MQILPIFFPLLITSLHA). The propeptide occupies 18–57 (IPRGRRAVRNRNEGDINSLVGVGQYLYQGDIAVVKSRARR). Positions 58 to 255 (AVIRQKHKKW…SRMNVLYNCH (198 aa)) constitute a Peptidase M12A domain. Disulfide bonds link Cys-99–Cys-254, Cys-120–Cys-141, Cys-258–Cys-276, Cys-281–Cys-290, Cys-306–Cys-339, and Cys-366–Cys-386. His-150 serves as a coordination point for Zn(2+). Residue Glu-151 is part of the active site. Positions 154 and 160 each coordinate Zn(2+). Asn-181 carries N-linked (GlcNAc...) asparagine glycosylation. The region spanning 250–291 (VLYNCHERCANTLNRCQQGGYPAPSDCSQCVCPDGFGGNFCE) is the EGF-like domain. In terms of domain architecture, CUB spans 306 to 428 (CGGVLWASET…LDFNIEYRAV (123 aa)). Residue Asn-377 is glycosylated (N-linked (GlcNAc...) asparagine).

Zn(2+) is required as a cofactor.

It is found in the secreted. Its function is as follows. Metalloprotease. The polypeptide is Zinc metalloproteinase nas-27 (nas-27) (Caenorhabditis elegans).